Reading from the N-terminus, the 170-residue chain is MALLPILEFPDPRLRTKAVPVDAAEVVSPAFQTLLDDMFQTMYEAPGIGLAASQVDVHKRFMVIDVSEEKDAPQVFINPEIVTRQGEQVYQEGCLSVPGIFADVSRADAITVRYLDRQGQPQELSTDGLLAVCIQHEMDHLDGKLFVDYLSPLKREMVRKKLAKLRKHVA.

The Fe cation site is built by Cys-94 and His-136. The active site involves Glu-137. His-140 contacts Fe cation.

Belongs to the polypeptide deformylase family. Fe(2+) serves as cofactor.

It catalyses the reaction N-terminal N-formyl-L-methionyl-[peptide] + H2O = N-terminal L-methionyl-[peptide] + formate. In terms of biological role, removes the formyl group from the N-terminal Met of newly synthesized proteins. Requires at least a dipeptide for an efficient rate of reaction. N-terminal L-methionine is a prerequisite for activity but the enzyme has broad specificity at other positions. The protein is Peptide deformylase 2 of Xanthomonas campestris pv. campestris (strain ATCC 33913 / DSM 3586 / NCPPB 528 / LMG 568 / P 25).